Reading from the N-terminus, the 68-residue chain is Conotoxin phi-MiXXVIIB (68 aa).

Positions 1 to 29 (MRFFFLLLTVALFLTSITGDDAERMLGMK) are cleaved as a signal peptide. Residues 30–35 (EGGYVR) constitute a propeptide that is removed on maturation. Intrachain disulfides connect cysteine 38–cysteine 49, cysteine 42–cysteine 51, cysteine 45–cysteine 56, and cysteine 50–cysteine 61. Proline 44 carries the post-translational modification 4-hydroxyproline.

The protein belongs to the conotoxin G2 superfamily. 1 family. As to expression, expressed by the venom duct.

It localises to the secreted. This peptide promotes cell proliferation (EC(50)=17.85 uM) and inhibits apoptosis (EC(50)=2.2 uM). In Conus miles (Soldier cone), this protein is Conotoxin phi-MiXXVIIB.